A 745-amino-acid polypeptide reads, in one-letter code: MEFDEIKKHSLNCNADVLSSLQASAPASSPHTVTLKVNAVAEATITEKRNQQQNVQKDFDSHNRDCDSPVSSTSELEKEFDDLRNLHTSSLTNSVVLGKSIGSLNGDYSVTSASSRTKTLENVVTIDSASGSTCLAIASPVDHIKKRIPNSRTPTRKALRIKFYRNGDRFYPGITIPVSNERYRSFERLYEDLTRLLEENVKIPGAVRTIYNMCGKKITSLDELEDGQSYVCSCNNENFKKVEYNTGSQPLSNLTLTNNSRSNNQRLAKCRPASPLKNGLLTGISPLPASGGGTGNGSPLIASRLSDRVSVVHPRIVTLIRSGTKPRRIMRLLLNKRNSPSFDHVLTAITQVVRLDTGYVRKVFTLSGISVVQLSDFFGSDDVFFAYGTERINYAEDFKLEAEEYRAINVIRKTMRTAGTTCKGPKPKMPIKSKKVYPPLVDSEVLKAATSPEDDSHATLLTSTGIEINELPLNIRNTYTLGRIIGDGNFAIVFKIKHRQTGDSYALKIIDKNKCKGKEHYIDAEVRVMKKLNHPHIISLILSVDQNTNMYLVLEYVSGGDLFDAITQVTRFSESQSRIMIRHLGAAMTYLHSMGIVHRDIKPENLLVKLDEHGNVLELKLADFGLACEVNDLLYAVCGTPTYVAPEILLEVGYGLKIDVWAAGIILYILLCGFPPFVAPDNQQEPLFDAIISGIYEFPDPYWSDIGDGVRDLIANMLQSDPDVRFTSEDILDHYWTIGNKGNDL.

The tract at residues 49–73 is disordered; it reads RNQQQNVQKDFDSHNRDCDSPVSST. Residues 57 to 67 are compositionally biased toward basic and acidic residues; it reads KDFDSHNRDCD. 2 consecutive Doublecortin domains span residues 159-245 and 315-398; these read LRIK…VEYN and RIVT…AEDF. Positions 479–737 constitute a Protein kinase domain; the sequence is YTLGRIIGDG…SEDILDHYWT (259 aa). Residues 485 to 493 and lysine 508 contribute to the ATP site; that span reads IGDGNFAIV. The Proton acceptor role is filled by aspartate 600.

This sequence belongs to the protein kinase superfamily. CAMK Ser/Thr protein kinase family. CaMK subfamily.

The enzyme catalyses L-seryl-[protein] + ATP = O-phospho-L-seryl-[protein] + ADP + H(+). The catalysed reaction is L-threonyl-[protein] + ATP = O-phospho-L-threonyl-[protein] + ADP + H(+). This chain is Serine/threonine-protein kinase GG21441, found in Drosophila erecta (Fruit fly).